The sequence spans 149 residues: Large ribosomal subunit protein uL15 (149 aa).

A disordered region spans residues 21–54; that stretch reads RGSASGLGCTSGKGNKGQNARSGGGVRPGFEGGQ. Composition is skewed to gly residues over residues 23–35 and 42–52; these read SASGLGCTSGKGN and SGGGVRPGFEG.

Belongs to the universal ribosomal protein uL15 family. Part of the 50S ribosomal subunit.

Its function is as follows. Binds to the 23S rRNA. The polypeptide is Large ribosomal subunit protein uL15 (Lawsonia intracellularis (strain PHE/MN1-00)).